Here is a 59-residue protein sequence, read N- to C-terminus: UPF0434 protein PMI0721 (59 aa).

This sequence belongs to the UPF0434 family.

This Proteus mirabilis (strain HI4320) protein is UPF0434 protein PMI0721.